A 921-amino-acid chain; its full sequence is MKTLSPTGYGLLLVLPLLLAVLQSTTAHKNDINIYSLTVDSKVSSRFAHTVVTSRVVNKGSAVQEATFQMELPKKAFITNFSMIIDGVTYPGNIKEKAAAQEQYSAVARGESAGLVRATGRKTEQFQVAVSVAPAAKVTFELVYEELLARHLGVYELLLKIQPQQLVKHLQMDIHIFEPQGISFLETESTFMTNELAEALTISQNKTKAHIRFKPTLSQQQKSPEQQETVLDGNFIVRYDVNRTVTGGSIQIENGYFVHYFAPEVWSAIPKNVIFVIDTSGSMRGRKIQQTREALIKILGDLGSRDQFNLVSFSGEAPRRRAVAASAENVEEAKSYAAEIHAQGGTNINDAMLMAVQLLERANREELLPARSVTFIILLTDGDPTVGETNPSKIQKNVREAIDGQHSLFCLGFGFDVPYAFLEKMALENGGLARRIYEDSDSALQLEDFYQEVANPLLRLVAFEYPSNAVEEVTQDNFRLFFKGSELVVAGKLRDQSPDVLSAKVRGQLHMENVTFVMESRVAEQEAEFLSPKYIFHSFMERLWAYLTIQQLLAQTVSASDAEKKALEARALSLSLNYSFVTPLTSMVITKPEGQEQSQVAEKPVENGNRQGNTHSGHSSFQFHSVGDRTSRLTGGSSVDPVFSHRRGWKGQAQGFEKMSYLPPRLGPPGPLQPTRFSHPFSRITLDRVLPEVLSVPDETSHDMDSRIIGATIPPPPARIQAPSVILPLPGQSVDQLCVDLKHSQGPVKLLSDPGQGVEVTGHYEREKARFSWIEVTFKHPPLQVRASLEHIVVIRNRQSSAYKWKETLYSVMPGLKITMDKAGLLLLSSPNRVTIGLLSWDGPGKGLRLLLRDTDHFSSQISGTFGQFYQDVVWGPPAAADDSKRTVTVQGHDHSATRELKLDYQEGSPGKEISCWTVVL.

The signal sequence occupies residues 1–27; that stretch reads MKTLSPTGYGLLLVLPLLLAVLQSTTA. A VIT domain is found at 28–146; sequence HKNDINIYSL…KVTFELVYEE (119 aa). N-linked (GlcNAc...) asparagine glycosylation is found at N80, N205, and N242. The region spanning 270-428 is the VWFA domain; that stretch reads PKNVIFVIDT…YAFLEKMALE (159 aa). N-linked (GlcNAc...) asparagine glycosylation is found at N513 and N577. Positions 591-646 are disordered; sequence KPEGQEQSQVAEKPVENGNRQGNTHSGHSSFQFHSVGDRTSRLTGGSSVDPVFSHR. The span at 608-623 shows a compositional bias: polar residues; that stretch reads GNRQGNTHSGHSSFQF. T712 carries O-linked (GalNAc...) threonine glycosylation. C738 and C916 are oxidised to a cystine.

It belongs to the ITIH family. Interacts (via C-terminus) with DNAJC1 (via SANT 2 domain). Appears to be both N- and O-glycosylated. Post-translationally, cleaved by plasma kallikrein to yield 55- and 25-kDa fragments. In terms of tissue distribution, liver specific.

The protein resides in the secreted. Type II acute-phase protein (APP) involved in inflammatory responses to trauma. May also play a role in liver development or regeneration. In Sus scrofa (Pig), this protein is Inter-alpha-trypsin inhibitor heavy chain H4 (ITIH4).